The sequence spans 216 residues: Ornithine decarboxylase antizyme 1 (216 aa).

It belongs to the ODC antizyme family. As to quaternary structure, interacts with ODC1 and thereby sterically blocks ODC homodimerization.

In terms of biological role, ornithine decarboxylase (ODC) antizyme protein that negatively regulates ODC activity and intracellular polyamine biosynthesis and uptake in response to increased intracellular polyamine levels. Binds to ODC monomers, inhibiting the assembly of the functional ODC homodimer, and targets the monomers for ubiquitin-independent proteolytic destruction by the 26S proteasome. This chain is Ornithine decarboxylase antizyme 1 (oaz1), found in Xenopus laevis (African clawed frog).